We begin with the raw amino-acid sequence, 683 residues long: Long-chain-fatty-acid--CoA ligase 5 (683 aa).

Residues Leu-12–Ile-32 traverse the membrane as a helical; Signal-anchor for type III membrane protein segment. Phosphoserine is present on Ile-32. Residues Thr-33–Asp-683 are Cytoplasmic-facing. Lys-361 is modified (N6-acetyllysine).

Belongs to the ATP-dependent AMP-binding enzyme family. It depends on Mg(2+) as a cofactor.

The protein resides in the mitochondrion. It localises to the endoplasmic reticulum. Its subcellular location is the mitochondrion outer membrane. It is found in the endoplasmic reticulum membrane. The protein localises to the cell membrane. It catalyses the reaction a long-chain fatty acid + ATP + CoA = a long-chain fatty acyl-CoA + AMP + diphosphate. The enzyme catalyses (5Z,8Z,11Z,14Z)-eicosatetraenoate + ATP + CoA = (5Z,8Z,11Z,14Z)-eicosatetraenoyl-CoA + AMP + diphosphate. The catalysed reaction is hexadecanoate + ATP + CoA = hexadecanoyl-CoA + AMP + diphosphate. It carries out the reaction (E)-hexadec-2-enoate + ATP + CoA = (2E)-hexadecenoyl-CoA + AMP + diphosphate. It catalyses the reaction 15-hydroxy-(5Z,8Z,11Z,13E)-eicosatetraenoate + ATP + CoA = 15-hydroxy-(5Z,8Z,11Z,13E)-eicosatetraenoyl-CoA + AMP + diphosphate. The enzyme catalyses 12-hydroxy-(5Z,8Z,10E,14Z)-eicosatetraenoate + ATP + CoA = 12-hydroxy-(5Z,8Z,10E,14Z)-eicosatetraenoyl-CoA + AMP + diphosphate. The catalysed reaction is 5-hydroxy-(6E,8Z,11Z,14Z)-eicosatetraenoate + ATP + CoA = 5-hydroxy-(6E,8Z,11Z,14Z)-eicosatetraenoyl-CoA + AMP + diphosphate. It carries out the reaction 14,15-epoxy-(5Z,8Z,11Z)-eicosatrienoate + ATP + CoA = 14,15-epoxy-(5Z,8Z,11Z)-eicosatrienoyl-CoA + AMP + diphosphate. It catalyses the reaction 11,12-epoxy-(5Z,8Z,14Z)-eicosatrienoate + ATP + CoA = 11,12-epoxy-(5Z,8Z,14Z)-eicosatrienoyl-CoA + AMP + diphosphate. The enzyme catalyses (9Z)-octadecenoate + ATP + CoA = (9Z)-octadecenoyl-CoA + AMP + diphosphate. Catalyzes the conversion of long-chain fatty acids to their active form acyl-CoAs for both synthesis of cellular lipids, and degradation via beta-oxidation. ACSL5 may activate fatty acids from exogenous sources for the synthesis of triacylglycerol destined for intracellular storage. Utilizes a wide range of saturated fatty acids with a preference for C16-C18 unsaturated fatty acids. It was suggested that it may also stimulate fatty acid oxidation. At the villus tip of the crypt-villus axis of the small intestine may sensitize epithelial cells to apoptosis specifically triggered by the death ligand TRAIL. May have a role in the survival of glioma cells. This chain is Long-chain-fatty-acid--CoA ligase 5, found in Homo sapiens (Human).